Consider the following 401-residue polypeptide: Formate-dependent phosphoribosylglycinamide formyltransferase (401 aa).

Residues 22-23 (EL) and Glu-82 each bind N(1)-(5-phospho-beta-D-ribosyl)glycinamide. Residues Arg-115, Lys-157, 162–167 (SSGKGQ), 197–200 (EGFI), and Glu-205 contribute to the ATP site. In terms of domain architecture, ATP-grasp spans 120–315 (RLAAETLGLP…EFELHARAIL (196 aa)). Mg(2+) is bound by residues Glu-274 and Glu-286. Residues Asp-293, Lys-362, and 369–370 (RR) each bind N(1)-(5-phospho-beta-D-ribosyl)glycinamide.

This sequence belongs to the PurK/PurT family. As to quaternary structure, homodimer.

It catalyses the reaction N(1)-(5-phospho-beta-D-ribosyl)glycinamide + formate + ATP = N(2)-formyl-N(1)-(5-phospho-beta-D-ribosyl)glycinamide + ADP + phosphate + H(+). The protein operates within purine metabolism; IMP biosynthesis via de novo pathway; N(2)-formyl-N(1)-(5-phospho-D-ribosyl)glycinamide from N(1)-(5-phospho-D-ribosyl)glycinamide (formate route): step 1/1. Involved in the de novo purine biosynthesis. Catalyzes the transfer of formate to 5-phospho-ribosyl-glycinamide (GAR), producing 5-phospho-ribosyl-N-formylglycinamide (FGAR). Formate is provided by PurU via hydrolysis of 10-formyl-tetrahydrofolate. This chain is Formate-dependent phosphoribosylglycinamide formyltransferase, found in Cupriavidus pinatubonensis (strain JMP 134 / LMG 1197) (Cupriavidus necator (strain JMP 134)).